The sequence spans 301 residues: Probable cyclic nucleotide phosphodiesterase RER_40650 (301 aa).

Fe cation-binding residues include Asp20, His22, Asp61, Asn95, His167, His205, and His207. Residues His22, Asp61, and 95–96 contribute to the AMP site; that span reads NH. AMP is bound at residue His207.

This sequence belongs to the cyclic nucleotide phosphodiesterase class-III family. It depends on Fe(2+) as a cofactor.

The sequence is that of Probable cyclic nucleotide phosphodiesterase RER_40650 from Rhodococcus erythropolis (strain PR4 / NBRC 100887).